Consider the following 190-residue polypeptide: MEALHQKIREQGIVLSDQVLKVDAFLNHQIDPALMKLIGDEFATLFKDSGITKIVTIEASGIAPAIMTGLNLGVPVIFARKQQSLTLTENLLSATVYSFTKKTESTVAISPRHLTSSDRVLIIDDFLANGKASQALISIIKQAGATVAGLGIVIEKSFQGGRAELDSQGYRVESLARVKSLKDGVVTFIE.

Xanthine is bound by residues Leu-20 and Asn-27. A 5-phospho-alpha-D-ribose 1-diphosphate-binding site is contributed by Ala-128–Ala-132. Lys-156 provides a ligand contact to xanthine.

It belongs to the purine/pyrimidine phosphoribosyltransferase family. Xpt subfamily. Homodimer.

Its subcellular location is the cytoplasm. It carries out the reaction XMP + diphosphate = xanthine + 5-phospho-alpha-D-ribose 1-diphosphate. It participates in purine metabolism; XMP biosynthesis via salvage pathway; XMP from xanthine: step 1/1. Converts the preformed base xanthine, a product of nucleic acid breakdown, to xanthosine 5'-monophosphate (XMP), so it can be reused for RNA or DNA synthesis. This chain is Xanthine phosphoribosyltransferase, found in Pseudomonas fluorescens (strain Pf0-1).